Here is a 958-residue protein sequence, read N- to C-terminus: MSKAELAVLERRLRPIYDSLDSQQFKKALSDCDKVLKKHPNTSAAKVLKALTLIRLEKLADATEILEALDVPGAHHDELTLQAFVHCYRDSNQHMKVVTLYERIIQVDPSEHNLTQLFMAYSREKMYKEQQKIGMRLYKDFGNAPYYFWSVMSLIMQAQENPELGKKMLLPLADKMCQTQVEKSGYTEGSSAELDLQLLILEGQEKWKECAAFLDRPQASVLPMAPYNLVEKGMDFLMKDKQYKRVDQLAMEAVTKMPDNWNLWKIITESTICQIEQCLESDNKENIELAHNFVKRLGLLIEKVQKQVGYKSRAPFIATFFAYKQIGKLTKQIPDMDDMTSIFGEQVDKMLEYAKNFYKKPVCFADLQMFFCDLTSEQKSNFLKGIDLWIGEVSAKDDVEGDESKVWAIILTERCRRALGEYEKMDAAGHRSLFQQCIAQIAAPERTEHAQGVLCNLTVSHLWDAYRKENDLTKFYEMILLLEFVAASNKTDPMCKLALIRAYSALCATGRISALVKTLDIKVIQMDTLGHLTFPVYETSGRFNLAIIQNTQLSLMYEQAEKEIQDCIAQAYRNGKFSAIPRMTAASKHMKLSAQKTACDVMNRYLSSLFVLDDVDQITVTLWGDEDPIGEKRIDWKQLIDTRDFNAIPYTETEEYEALLDDMKKRTFKELIDISELRSTLCRALGAVGRVTHENMEPRLARLQLKMTVMEFKQHLEYCCREYPSFLIPSKLAQSPAPHHLSQWVHSGGLQMVLEYLEAAVKLVDILDSGEHPEKSLVGTRTEMATKLIKLIEIPPKRKEGEKLPPFWIVDPIIKSSRALQTIAAIQVVLRLIEKVVLKLVKNVPTAVPEPVGKGKGKKDKKAAEEAMTKALDECKAVVFLEHIRAMHVELRSAGNFLHTYLGQMLALEDEYIPSNIGEDLGGAKAALEGMHNPVASRLQRSFLNTCEDMHTTIKLRF.

3 TPR repeats span residues 7–42 (AVLE…HPNT), 78–111 (ELTL…DPSE), and 320–353 (FFAY…MLEY).

The protein belongs to the MDM20/NAA25 family. Component of the N-terminal acetyltransferase B (NatB) complex. Interacts with acer-1. As to expression, expressed in germline and somatic cells.

It is found in the cytoplasm. It localises to the nucleus. The protein localises to the chromosome. In terms of biological role, non-catalytic subunit of the NatB complex which catalyzes acetylation of the N-terminal methionine residues of proteins beginning with Met-Asp or Met-Glu. Required for chromosome organization and arrangement; specifically for assembly of the central region components of the synaptonemal complex onto chromosomes during meiosis and for DNA double stranded break formation and repair. Acts downstream of xnd-1 to regulate levels of histone acetylation in germ and somatic cell nuclei by controlling acetyl-CoA production through antagonizing the acetyl-CoA hydrolase activity of acer-1. The polypeptide is N-terminal acetyltransferase B complex subunit NAA25 homolog (Caenorhabditis elegans).